The sequence spans 542 residues: Chaperonin GroEL 2 (542 aa).

ATP is bound by residues 30-33 (TLGP), Lys51, 87-91 (DGTTT), Gly415, and Asp496.

The protein belongs to the chaperonin (HSP60) family. Forms a cylinder of 14 subunits composed of two heptameric rings stacked back-to-back. Interacts with the co-chaperonin GroES.

It localises to the cytoplasm. The enzyme catalyses ATP + H2O + a folded polypeptide = ADP + phosphate + an unfolded polypeptide.. Functionally, together with its co-chaperonin GroES, plays an essential role in assisting protein folding. The GroEL-GroES system forms a nano-cage that allows encapsulation of the non-native substrate proteins and provides a physical environment optimized to promote and accelerate protein folding. The sequence is that of Chaperonin GroEL 2 from Rhizobium etli (strain ATCC 51251 / DSM 11541 / JCM 21823 / NBRC 15573 / CFN 42).